Reading from the N-terminus, the 377-residue chain is Protein-tyrosine sulfotransferase 2 (377 aa).

The Cytoplasmic segment spans residues 1-8; it reads MRLSMRRA. The helical; Signal-anchor for type II membrane protein transmembrane segment at 9 to 25 threads the bilayer; sequence LLAAGLALALVLAVHLG. Residues 26–377 are Lumenal-facing; it reads QRVLECQAVL…NSTSSHLGSS (352 aa). 78–82 serves as a coordination point for 3'-phosphoadenylyl sulfate; it reads RSGTT. A disulfide bond links Cys-96 and Cys-156. The active-site Proton donor/acceptor is the Glu-99. The segment at 101–105 is interaction with peptide substrate; the sequence is RIIPR. 3 residues coordinate 3'-phosphoadenylyl sulfate: Arg-183, Ser-191, and Arg-195. A disulfide bridge links Cys-225 with Cys-233. 3'-phosphoadenylyl sulfate-binding positions include Tyr-238, 285–294, and Lys-300; that span reads STDQVIKPVN. Asn-343 and Asn-368 each carry an N-linked (GlcNAc...) asparagine glycan.

The protein belongs to the protein sulfotransferase family. In terms of assembly, homodimer. Can also form heterodimers with TPST1. In terms of processing, N-glycosylated.

The protein resides in the golgi apparatus membrane. It catalyses the reaction L-tyrosyl-[protein] + 3'-phosphoadenylyl sulfate = O-sulfo-L-tyrosine-[protein] + adenosine 3',5'-bisphosphate + H(+). Catalyzes the O-sulfation of tyrosine residues within acidic motifs of polypeptides, using 3'-phosphoadenylyl sulfate (PAPS) as cosubstrate. The protein is Protein-tyrosine sulfotransferase 2 (TPST2) of Bos taurus (Bovine).